We begin with the raw amino-acid sequence, 34 residues long: Phalloidin proprotein (34 aa).

Positions Met1–Pro10 are excised as a propeptide. Residues Ala11–Pro17 constitute a cross-link (cyclopeptide (Ala-Pro)). Residues Trp12 to Cys16 constitute a cross-link (2'-cysteinyl-6'-hydroxytryptophan sulfoxide (Trp-Cys)). A propeptide spanning residues Cys18–Cys34 is cleaved from the precursor.

Belongs to the MSDIN fungal toxin family. In terms of processing, processed by the macrocyclase-peptidase enzyme POPB to yield a toxic cyclic heptapeptide. POPB first removes 10 residues from the N-terminus. Conformational trapping of the remaining peptide forces the enzyme to release this intermediate rather than proceed to macrocyclization. The enzyme rebinds the remaining peptide in a different conformation and catalyzes macrocyclization of the N-terminal 7 residues.

In terms of biological role, toxin that belongs to the bicyclic heptapeptides called phallotoxins. Although structurally related to amatoxins, phallotoxins have a different mode of action, which is the stabilization of F-actin. Phallotoxins are poisonous when administered parenterally, but not orally because of poor absorption. The polypeptide is Phalloidin proprotein (Amanita phalloides (Death cap)).